The sequence spans 320 residues: ATP-dependent 6-phosphofructokinase (320 aa).

Glycine 12 contacts ATP. Residue 22 to 26 participates in ADP binding; sequence RGVVR. ATP is bound by residues 73–74 and 103–106; these read RF and GDGS. Residue aspartate 104 coordinates Mg(2+). Substrate is bound at residue 126-128; sequence TID. The active-site Proton acceptor is aspartate 128. ADP is bound at residue arginine 155. Substrate-binding positions include arginine 163 and 170–172; that span reads MGR. ADP is bound by residues 186 to 188, lysine 212, and 214 to 216; these read GCE and KKH. Residues glutamate 223, arginine 244, and 250–253 each bind substrate; that span reads HIQR.

It belongs to the phosphofructokinase type A (PFKA) family. ATP-dependent PFK group I subfamily. Prokaryotic clade 'B1' sub-subfamily. As to quaternary structure, homotetramer. Mg(2+) is required as a cofactor.

The protein resides in the cytoplasm. The catalysed reaction is beta-D-fructose 6-phosphate + ATP = beta-D-fructose 1,6-bisphosphate + ADP + H(+). Its pathway is carbohydrate degradation; glycolysis; D-glyceraldehyde 3-phosphate and glycerone phosphate from D-glucose: step 3/4. Allosterically activated by ADP and other diphosphonucleosides, and allosterically inhibited by phosphoenolpyruvate. Functionally, catalyzes the phosphorylation of D-fructose 6-phosphate to fructose 1,6-bisphosphate by ATP, the first committing step of glycolysis. The protein is ATP-dependent 6-phosphofructokinase of Vibrio vulnificus (strain CMCP6).